A 108-amino-acid polypeptide reads, in one-letter code: ATP synthase epsilon chain (108 aa).

The protein belongs to the ATPase epsilon chain family. As to quaternary structure, F-type ATPases have 2 components, CF(1) - the catalytic core - and CF(0) - the membrane proton channel. CF(1) has five subunits: alpha(3), beta(3), gamma(1), delta(1), epsilon(1). CF(0) has three main subunits: a, b and c.

Its subcellular location is the cell inner membrane. Functionally, produces ATP from ADP in the presence of a proton gradient across the membrane. In Rickettsia bellii (strain OSU 85-389), this protein is ATP synthase epsilon chain.